The sequence spans 587 residues: Pyruvate kinase (587 aa).

Position 33 (arginine 33) interacts with substrate. The K(+) site is built by asparagine 35, serine 37, aspartate 67, and threonine 68. 35-38 (NFSH) contributes to the ATP binding site. Residues arginine 74 and lysine 157 each contribute to the ATP site. Residue lysine 221 participates in substrate binding. Mg(2+) is bound at residue glutamate 223. Substrate-binding residues include glycine 246, aspartate 247, and threonine 279. Position 247 (aspartate 247) interacts with Mg(2+).

Belongs to the pyruvate kinase family. It in the C-terminal section; belongs to the PEP-utilizing enzyme family. Homotetramer. Mg(2+) is required as a cofactor. The cofactor is K(+). The N-terminus is blocked.

The enzyme catalyses pyruvate + ATP = phosphoenolpyruvate + ADP + H(+). It participates in carbohydrate degradation; glycolysis; pyruvate from D-glyceraldehyde 3-phosphate: step 5/5. Its activity is regulated as follows. Exhibits homotropic positive cooperativity for PEP. Allosterically activated by ribose-5-phosphate, AMP and other nucleoside monophosphates but not by fructose-1,6-bisphosphate. Its function is as follows. Catalyzes the phosphoryl transfer from phosphoenolpyruvate (PEP) to ADP to form pyruvate and ATP. Has a broad specificity for nucleoside diphosphates and can use ADP, GDP, IDP and UDP. The protein is Pyruvate kinase (pyk) of Geobacillus stearothermophilus (Bacillus stearothermophilus).